The following is a 263-amino-acid chain: 7beta-hydroxysteroid dehydrogenase (263 aa).

Residues 17–21 (TEGVG), 40–41 (RR), and 66–67 (DF) contribute to the NADP(+) site. Tyr156 functions as the Proton acceptor in the catalytic mechanism. Ser240 serves as a coordination point for NADP(+).

It belongs to the short-chain dehydrogenases/reductases (SDR) family. In terms of assembly, homodimer.

It catalyses the reaction a 7beta-hydroxysteroid + NADP(+) = a 7-oxosteroid + NADPH + H(+). It carries out the reaction 7-oxolithocholate + NADPH + H(+) = ursodeoxycholate + NADP(+). The catalysed reaction is 7beta-hydroxy-3,12-dioxo-5beta-cholan-24-oate + NADP(+) = dehydrocholate + NADPH + H(+). The enzyme catalyses ursocholate + NADP(+) = 3alpha,12alpha-dihydroxy-7-oxo-5beta-cholanate + NADPH + H(+). 7beta-hydroxysteroid dehydrogenase that catalyzes the reduction of the 7-oxo group of 7-oxo-lithocholate (7-oxo-LCA), to yield ursodeoxycholate (UDCA). As C.aerofaciens is an intestinal bacterium, this enzyme probably contributes to the formation of UDCA in the human colon. UDCA is regarded as a chemopreventive beneficial secondary bile acid due to its low hydrophobicity; it protects hepatocytes and bile duct epithelial cells against necrosis and apoptosis induced by more hydrophobic secondary bile acids like deoxycholate (DCA). This enzyme is also able to catalyze the reverse reaction, i.e. the oxidation of the 7beta-hydroxy group of UDCA to 7-oxo-LCA. To a lesser extent, is also active on the taurine- and glycine-conjugates of ursodeoxycholate. It is specific for NADPH/NADP(+) as the electron acceptor/donor since it is not active with NADH/NAD(+). In the presence of NADPH, 7beta-HSDH can also reduce dehydrocholate. And is also able to oxidize ursocholate. The sequence is that of 7beta-hydroxysteroid dehydrogenase from Collinsella aerofaciens (strain ATCC 25986 / DSM 3979 / JCM 10188 / KCTC 3647 / NCTC 11838 / VPI 1003).